Reading from the N-terminus, the 363-residue chain is MSGNTYGKLFTVTTAGESHGPALVAIVDGCPPGLELSLDDLQRDLDRRKPGTSRHTTQRQEADEVEILSGVFEGRTTGCPIGLLIRNTDQKSKDYSAIKDLFRPAHADYTYHHKYGLRDYRGGGRSSARETAMRVAAGAIAKKYLATLGIQVRGYMSQLGPIEIPFKTWDSVEQNAFFSPDPDNVPELEAYMDQLRRDQDSVGAKITVVAEGVPPGLGEPIFDRLDAELAHALMSINAVKGVEIGAGFASVAQRGTEHRDELTPQGFLSNNAGGILGGISSGQPIVAHLALKPTSSITTPGRSIDVNGEAVDVITKGRHDPCVGIRATPIAEAMMAIVLLDHLLRHRAQNADVQVTTPVLGQL.

Residues Arg48 and Arg54 each coordinate NADP(+). FMN-binding positions include 125 to 127 (RSS), 237 to 238 (NA), Gly277, 292 to 296 (KPTSS), and Arg318.

This sequence belongs to the chorismate synthase family. In terms of assembly, homotetramer. Requires FMNH2 as cofactor.

The enzyme catalyses 5-O-(1-carboxyvinyl)-3-phosphoshikimate = chorismate + phosphate. It participates in metabolic intermediate biosynthesis; chorismate biosynthesis; chorismate from D-erythrose 4-phosphate and phosphoenolpyruvate: step 7/7. Catalyzes the anti-1,4-elimination of the C-3 phosphate and the C-6 proR hydrogen from 5-enolpyruvylshikimate-3-phosphate (EPSP) to yield chorismate, which is the branch point compound that serves as the starting substrate for the three terminal pathways of aromatic amino acid biosynthesis. This reaction introduces a second double bond into the aromatic ring system. The chain is Chorismate synthase from Stutzerimonas stutzeri (strain A1501) (Pseudomonas stutzeri).